Here is a 662-residue protein sequence, read N- to C-terminus: Tubulin--tyrosine ligase-like protein 12 (662 aa).

In terms of domain architecture, TTL spans Leu324–Thr660. ATP contacts are provided by residues Cys472–Ile475, Lys491, and Asp493.

The protein belongs to the tubulin--tyrosine ligase family.

In terms of biological role, regulates microtubule dynamics in uterine muscle cells. This is Tubulin--tyrosine ligase-like protein 12 from Caenorhabditis elegans.